Here is a 156-residue protein sequence, read N- to C-terminus: Small ribosomal subunit protein uS7 (156 aa).

Belongs to the universal ribosomal protein uS7 family. In terms of assembly, part of the 30S ribosomal subunit. Contacts proteins S9 and S11.

One of the primary rRNA binding proteins, it binds directly to 16S rRNA where it nucleates assembly of the head domain of the 30S subunit. Is located at the subunit interface close to the decoding center, probably blocks exit of the E-site tRNA. In Parasynechococcus marenigrum (strain WH8102), this protein is Small ribosomal subunit protein uS7.